Consider the following 225-residue polypeptide: Enolase-phosphatase E1 (225 aa).

The protein belongs to the HAD-like hydrolase superfamily. MasA/MtnC family. In terms of assembly, monomer. Mg(2+) serves as cofactor.

It catalyses the reaction 5-methylsulfanyl-2,3-dioxopentyl phosphate + H2O = 1,2-dihydroxy-5-(methylsulfanyl)pent-1-en-3-one + phosphate. Its pathway is amino-acid biosynthesis; L-methionine biosynthesis via salvage pathway; L-methionine from S-methyl-5-thio-alpha-D-ribose 1-phosphate: step 3/6. It functions in the pathway amino-acid biosynthesis; L-methionine biosynthesis via salvage pathway; L-methionine from S-methyl-5-thio-alpha-D-ribose 1-phosphate: step 4/6. Functionally, bifunctional enzyme that catalyzes the enolization of 2,3-diketo-5-methylthiopentyl-1-phosphate (DK-MTP-1-P) into the intermediate 2-hydroxy-3-keto-5-methylthiopentenyl-1-phosphate (HK-MTPenyl-1-P), which is then dephosphorylated to form the acireductone 1,2-dihydroxy-3-keto-5-methylthiopentene (DHK-MTPene). This is Enolase-phosphatase E1 from Shewanella halifaxensis (strain HAW-EB4).